A 152-amino-acid polypeptide reads, in one-letter code: Deoxyuridine 5'-triphosphate nucleotidohydrolase (152 aa).

Substrate-binding positions include arginine 71–glycine 73, asparagine 84, and threonine 88–aspartate 90.

It belongs to the dUTPase family. Mg(2+) serves as cofactor.

It catalyses the reaction dUTP + H2O = dUMP + diphosphate + H(+). Its pathway is pyrimidine metabolism; dUMP biosynthesis; dUMP from dCTP (dUTP route): step 2/2. In terms of biological role, this enzyme is involved in nucleotide metabolism: it produces dUMP, the immediate precursor of thymidine nucleotides and it decreases the intracellular concentration of dUTP so that uracil cannot be incorporated into DNA. The sequence is that of Deoxyuridine 5'-triphosphate nucleotidohydrolase from Roseobacter denitrificans (strain ATCC 33942 / OCh 114) (Erythrobacter sp. (strain OCh 114)).